The sequence spans 270 residues: UPF0354 protein BCAH187_A4826 (270 aa).

It belongs to the UPF0354 family.

In Bacillus cereus (strain AH187), this protein is UPF0354 protein BCAH187_A4826.